The following is a 743-amino-acid chain: Elongation factor 2 (743 aa).

Residues 19–265 (NNIRNIGIIA…MVVRHLPSPK (247 aa)) form the tr-type G domain. Residues 28-35 (AHIHHGKT), 94-98 (DTPGH), and 148-151 (NKVD) contribute to the GTP site. Diphthamide is present on H615.

This sequence belongs to the TRAFAC class translation factor GTPase superfamily. Classic translation factor GTPase family. EF-G/EF-2 subfamily.

The protein resides in the cytoplasm. Its function is as follows. Catalyzes the GTP-dependent ribosomal translocation step during translation elongation. During this step, the ribosome changes from the pre-translocational (PRE) to the post-translocational (POST) state as the newly formed A-site-bound peptidyl-tRNA and P-site-bound deacylated tRNA move to the P and E sites, respectively. Catalyzes the coordinated movement of the two tRNA molecules, the mRNA and conformational changes in the ribosome. In Nanoarchaeum equitans (strain Kin4-M), this protein is Elongation factor 2.